The chain runs to 85 residues: uncharacterized protein (85 aa).

Disordered stretches follow at residues 1-28 and 35-54; these read MPQKPLKVTKKAKDPRRVTKKQKNLRKA and SKKKSLQHLKKLKKSSSLTE. Positions 35–48 are enriched in basic residues; sequence SKKKSLQHLKKLKK.

The protein resides in the nucleus. This is an uncharacterized protein from Saccharomyces cerevisiae (strain ATCC 204508 / S288c) (Baker's yeast).